The sequence spans 456 residues: Putrescine--pyruvate aminotransferase (456 aa).

Tyrosine 156 is a binding site for substrate. Position 262 (aspartate 262) interacts with pyridoxal 5'-phosphate. Lysine 291 carries the post-translational modification N6-(pyridoxal phosphate)lysine. 2 residues coordinate substrate: glycine 322 and arginine 417.

Belongs to the class-III pyridoxal-phosphate-dependent aminotransferase family. Pyridoxal 5'-phosphate is required as a cofactor.

It carries out the reaction putrescine + pyruvate = 4-aminobutanal + L-alanine. Its pathway is amine and polyamine degradation; putrescine degradation; 4-aminobutanal from putrescine (transaminase route). Functionally, involved in the putrescine catabolism. Catalyzes the transfer of the amino group from putrescine to pyruvate to yield 4-aminobutanal and alanine. The sequence is that of Putrescine--pyruvate aminotransferase from Pseudomonas aeruginosa (strain ATCC 15692 / DSM 22644 / CIP 104116 / JCM 14847 / LMG 12228 / 1C / PRS 101 / PAO1).